A 159-amino-acid chain; its full sequence is Phosphopantetheine adenylyltransferase (159 aa).

Residue serine 8 participates in substrate binding. ATP is bound by residues 8 to 9 (SF) and histidine 16. Substrate contacts are provided by lysine 40, leucine 72, and arginine 86. ATP is bound by residues 87-89 (GLR), glutamate 97, and 122-128 (YSFISSS).

The protein belongs to the bacterial CoaD family. As to quaternary structure, homohexamer. The cofactor is Mg(2+).

The protein localises to the cytoplasm. The enzyme catalyses (R)-4'-phosphopantetheine + ATP + H(+) = 3'-dephospho-CoA + diphosphate. The protein operates within cofactor biosynthesis; coenzyme A biosynthesis; CoA from (R)-pantothenate: step 4/5. Functionally, reversibly transfers an adenylyl group from ATP to 4'-phosphopantetheine, yielding dephospho-CoA (dPCoA) and pyrophosphate. This is Phosphopantetheine adenylyltransferase from Thermosipho melanesiensis (strain DSM 12029 / CIP 104789 / BI429).